The following is a 216-amino-acid chain: 3-isopropylmalate dehydratase small subunit (216 aa).

Belongs to the LeuD family. LeuD type 1 subfamily. As to quaternary structure, heterodimer of LeuC and LeuD.

It catalyses the reaction (2R,3S)-3-isopropylmalate = (2S)-2-isopropylmalate. The protein operates within amino-acid biosynthesis; L-leucine biosynthesis; L-leucine from 3-methyl-2-oxobutanoate: step 2/4. Catalyzes the isomerization between 2-isopropylmalate and 3-isopropylmalate, via the formation of 2-isopropylmaleate. This chain is 3-isopropylmalate dehydratase small subunit, found in Acidovorax ebreus (strain TPSY) (Diaphorobacter sp. (strain TPSY)).